A 309-amino-acid polypeptide reads, in one-letter code: Syndecan-1 (309 aa).

The first 22 residues, 1-22 (MRRAALWLWLCALALRLQPVLP), serve as a signal peptide directing secretion. Topologically, residues 24 to 253 (IMAVNVPPED…GLLDRKEVLG (230 aa)) are extracellular. Disordered stretches follow at residues 28–57 (NVPP…DITL) and 142–185 (ARAT…GGTS). A compositionally biased stretch (acidic residues) spans 32–42 (EDQDGSGDDSD). Ser37 is a glycosylation site (O-linked (Xyl...) (chondroitin sulfate) serine). N-linked (GlcNAc...) asparagine glycosylation occurs at Asn43. Ser45 and Ser47 each carry an O-linked (Xyl...) (heparan sulfate) serine glycan. The segment covering 142–151 (ARATTAQAPV) has biased composition (polar residues). Residues Ser205 and Ser215 are each glycosylated (O-linked (Xyl...) (chondroitin sulfate) serine). Residues 254–274 (GVIAGGLVGLIFAVCLVGFML) form a helical membrane-spanning segment. Over 275 to 309 (YRMKKKDEGSYSLEEPKQANGGAYQKPTKQEEFYA) the chain is Cytoplasmic. The interval 283-309 (GSYSLEEPKQANGGAYQKPTKQEEFYA) is disordered. A Phosphoserine modification is found at Ser284.

It belongs to the syndecan proteoglycan family. Interacts with CDCP1. Interacts (via C-terminus) with TIAM1 (via PDZ domain). Interacts with MDK. Post-translationally, shedding is enhanced by a number of factors such as heparanase, thrombin or EGF. Also by stress and wound healing. PMA-mediated shedding is inhibited by TIMP3.

Its subcellular location is the membrane. It localises to the secreted. The protein localises to the extracellular exosome. In terms of biological role, cell surface proteoglycan that contains both heparan sulfate and chondroitin sulfate and that links the cytoskeleton to the interstitial matrix. Regulates exosome biogenesis in concert with SDCBP and PDCD6IP. Able to induce its own expression in dental mesenchymal cells and also in the neighboring dental epithelial cells via an MSX1-mediated pathway. The sequence is that of Syndecan-1 from Cricetulus griseus (Chinese hamster).